The chain runs to 259 residues: Gene 2 protein (259 aa).

Basic and acidic residues-rich tracts occupy residues methionine 1–glutamate 12 and glutamine 21–lysine 36. A disordered region spans residues methionine 1 to lysine 36.

The protein is Gene 2 protein (2) of Mycobacterium (Mycobacteriophage L5).